Consider the following 157-residue polypeptide: 2-C-methyl-D-erythritol 2,4-cyclodiphosphate synthase (157 aa).

Positions 8 and 10 each coordinate a divalent metal cation. 4-CDP-2-C-methyl-D-erythritol 2-phosphate-binding positions include 8-10 (DVH) and 34-35 (HS). Histidine 42 contributes to the a divalent metal cation binding site. 4-CDP-2-C-methyl-D-erythritol 2-phosphate-binding positions include 56–58 (DIG), 132–135 (TTNE), and arginine 142.

Belongs to the IspF family. Homotrimer. A divalent metal cation is required as a cofactor.

The catalysed reaction is 4-CDP-2-C-methyl-D-erythritol 2-phosphate = 2-C-methyl-D-erythritol 2,4-cyclic diphosphate + CMP. Its pathway is isoprenoid biosynthesis; isopentenyl diphosphate biosynthesis via DXP pathway; isopentenyl diphosphate from 1-deoxy-D-xylulose 5-phosphate: step 4/6. Its function is as follows. Involved in the biosynthesis of isopentenyl diphosphate (IPP) and dimethylallyl diphosphate (DMAPP), two major building blocks of isoprenoid compounds. Catalyzes the conversion of 4-diphosphocytidyl-2-C-methyl-D-erythritol 2-phosphate (CDP-ME2P) to 2-C-methyl-D-erythritol 2,4-cyclodiphosphate (ME-CPP) with a corresponding release of cytidine 5-monophosphate (CMP). This chain is 2-C-methyl-D-erythritol 2,4-cyclodiphosphate synthase, found in Prosthecochloris aestuarii (strain DSM 271 / SK 413).